An 85-amino-acid polypeptide reads, in one-letter code: Large ribosomal subunit protein bL27 (85 aa).

The disordered stretch occupies residues 1–21 (MAHKKGVGSSRNGRDSDGQRL).

Belongs to the bacterial ribosomal protein bL27 family.

This Citrifermentans bemidjiense (strain ATCC BAA-1014 / DSM 16622 / JCM 12645 / Bem) (Geobacter bemidjiensis) protein is Large ribosomal subunit protein bL27.